A 691-amino-acid chain; its full sequence is Elongation factor G (691 aa).

A tr-type G domain is found at 8–283 (KRVRNIGIAA…AVVAYLPAPD (276 aa)). GTP-binding positions include 17-24 (AHIDAGKT), 81-85 (DTPGH), and 135-138 (NKMD).

The protein belongs to the TRAFAC class translation factor GTPase superfamily. Classic translation factor GTPase family. EF-G/EF-2 subfamily.

It localises to the cytoplasm. Its function is as follows. Catalyzes the GTP-dependent ribosomal translocation step during translation elongation. During this step, the ribosome changes from the pre-translocational (PRE) to the post-translocational (POST) state as the newly formed A-site-bound peptidyl-tRNA and P-site-bound deacylated tRNA move to the P and E sites, respectively. Catalyzes the coordinated movement of the two tRNA molecules, the mRNA and conformational changes in the ribosome. In Campylobacter lari (strain RM2100 / D67 / ATCC BAA-1060), this protein is Elongation factor G.